The following is a 234-amino-acid chain: Large ribosomal subunit protein uL1 (234 aa).

Belongs to the universal ribosomal protein uL1 family. As to quaternary structure, part of the 50S ribosomal subunit.

In terms of biological role, binds directly to 23S rRNA. The L1 stalk is quite mobile in the ribosome, and is involved in E site tRNA release. Functionally, protein L1 is also a translational repressor protein, it controls the translation of the L11 operon by binding to its mRNA. This chain is Large ribosomal subunit protein uL1, found in Serratia proteamaculans (strain 568).